The sequence spans 175 residues: Phosphatidylglycerol/phosphatidylinositol transfer protein (175 aa).

The N-terminal stretch at 1 to 21 is a signal peptide; it reads MKFLSTAAALLVCLAPVSTTA. The propeptide occupies 22–37; sequence RSLDFFKSSQSPIQAQ.

This sequence belongs to the NPC2 family. In terms of assembly, monomer.

Its subcellular location is the cytoplasm. It localises to the cytoplasmic vesicle. The protein localises to the golgi apparatus. Catalyzes the intermembrane transfer of phosphatidylglycerol and phosphatidylinositol. In Aspergillus oryzae (strain ATCC 42149 / RIB 40) (Yellow koji mold), this protein is Phosphatidylglycerol/phosphatidylinositol transfer protein (pltp).